The sequence spans 305 residues: Protoheme IX farnesyltransferase (305 aa).

9 consecutive transmembrane segments (helical) span residues 31-51, 52-72, 96-118, 123-145, 151-171, 179-199, 225-245, 247-267, and 281-301; these read VMSLVIFTGFVGMWLAPYSVH, PFIAGIAVVCIALGAGSAGAI, VIESDEALSFGLITGFFAVFFMA, LLASFLLLFTIFYYICIYTIWLK, NIVIGGVSGALPPVIGYAAVS, IILFLIIFIWTPPHSWALALF, ILIYSILLFIVSLMPFFIGMN, FIYLIISGILGVVFLYYAGSL, and FAYSIFYLFFIFLLLYSTNTI.

Belongs to the UbiA prenyltransferase family. Protoheme IX farnesyltransferase subfamily.

It localises to the cell membrane. It carries out the reaction heme b + (2E,6E)-farnesyl diphosphate + H2O = Fe(II)-heme o + diphosphate. It participates in porphyrin-containing compound metabolism; heme O biosynthesis; heme O from protoheme: step 1/1. In terms of biological role, converts heme B (protoheme IX) to heme O by substitution of the vinyl group on carbon 2 of heme B porphyrin ring with a hydroxyethyl farnesyl side group. The protein is Protoheme IX farnesyltransferase of Rickettsia africae (strain ESF-5).